Consider the following 202-residue polypeptide: Small ribosomal subunit protein uS4c-1 (202 aa).

One can recognise an S4 RNA-binding domain in the interval 90–152 (MRLDNIVLRA…NKSRQLIDLN (63 aa)).

It belongs to the universal ribosomal protein uS4 family. As to quaternary structure, part of the 30S ribosomal subunit. Contacts protein S5. The interaction surface between S4 and S5 is involved in control of translational fidelity.

It localises to the plastid. The protein resides in the chloroplast. In terms of biological role, one of the primary rRNA binding proteins, it binds directly to 16S rRNA where it nucleates assembly of the body of the 30S subunit. Functionally, with S5 and S12 plays an important role in translational accuracy. In Cyanidium caldarium (Red alga), this protein is Small ribosomal subunit protein uS4c-1.